A 128-amino-acid polypeptide reads, in one-letter code: UPF0102 protein RPB_0420 (128 aa).

This sequence belongs to the UPF0102 family.

This is UPF0102 protein RPB_0420 from Rhodopseudomonas palustris (strain HaA2).